We begin with the raw amino-acid sequence, 51 residues long: Putative ribosomal protein eL39-like 5 (51 aa).

It belongs to the eukaryotic ribosomal protein eL39 family.

The polypeptide is Putative ribosomal protein eL39-like 5 (RPL39P5) (Homo sapiens (Human)).